A 152-amino-acid chain; its full sequence is Ribosome maturation factor RimP (152 aa).

This sequence belongs to the RimP family.

It localises to the cytoplasm. In terms of biological role, required for maturation of 30S ribosomal subunits. In Clostridium beijerinckii (strain ATCC 51743 / NCIMB 8052) (Clostridium acetobutylicum), this protein is Ribosome maturation factor RimP.